The sequence spans 124 residues: MSQSLFNLKSLSRSINNTIRMRRYIVITKASQRAYTIGSSQEKPSWASDPDTGYFRPETAAKELDPYIAKTSQVQGKMMRGEELWWMPDPQTGYYRPDNFARELDAVELRSLHFNKNQKTYVVS.

A mitochondrion-targeting transit peptide spans 1–35 (MSQSLFNLKSLSRSINNTIRMRRYIVITKASQRAY).

It belongs to the LEA type 3 family.

The protein resides in the mitochondrion. The polypeptide is Late embryogenesis abundant protein 37 (Arabidopsis thaliana (Mouse-ear cress)).